We begin with the raw amino-acid sequence, 226 residues long: V-type proton ATPase subunit E 2 (226 aa).

Belongs to the V-ATPase E subunit family. As to quaternary structure, V-ATPase is a heteromultimeric enzyme made up of two complexes: the ATP-hydrolytic V1 complex and the proton translocation V0 complex. The V1 complex consists of three catalytic AB heterodimers that form a heterohexamer, three peripheral stalks each consisting of EG heterodimers, one central rotor including subunits D and F, and the regulatory subunits C and H. The proton translocation complex V0 consists of the proton transport subunit a, a ring of proteolipid subunits c9c'', rotary subunit d, subunits e and f, and the accessory subunits ATP6AP1/Ac45 and ATP6AP2/PRR.

In terms of biological role, subunit of the V1 complex of vacuolar(H+)-ATPase (V-ATPase), a multisubunit enzyme composed of a peripheral complex (V1) that hydrolyzes ATP and a membrane integral complex (V0) that translocates protons. V-ATPase is responsible for acidifying and maintaining the pH of intracellular compartments and in some cell types, is targeted to the plasma membrane, where it is responsible for acidifying the extracellular environment. This is V-type proton ATPase subunit E 2 (ATP6V1E2) from Bos taurus (Bovine).